Reading from the N-terminus, the 416-residue chain is Keratin, type I cuticular Ha1 (416 aa).

The head stretch occupies residues 2 to 56 (PYNCCLPALSCRTSCSSRPCVPPSCHGCTLPGACNIPANVGNCNWFCEGSFNGNE). Positions 56–367 (EKETMQFLND…GLLESEDCKL (312 aa)) constitute an IF rod domain. The tract at residues 57 to 91 (KETMQFLNDRLASYMEKVRQLERENAELECRIQER) is coil 1A. Residues 92 to 102 (NQQQDPLVCPA) form a linker 1 region. Residues 103-203 (YQAYFRTIEE…HEEEVNTLRC (101 aa)) form a coil 1B region. Positions 204-219 (QLGDRLNVEVDAAPTV) are linker 12. Residues 220–363 (DLNRVLNETR…NTYRGLLESE (144 aa)) form a coil 2 region. A tail region spans residues 364–416 (DCKLPCNPCATSNACGKPIGPCVSNPCVPCPPPAPCTPCVPRPRCGPCNSFVR).

This sequence belongs to the intermediate filament family.

The polypeptide is Keratin, type I cuticular Ha1 (Krt31) (Mus musculus (Mouse)).